The primary structure comprises 220 residues: 7-cyano-7-deazaguanine synthase (220 aa).

10–20 is an ATP binding site; sequence FSGGQDSTTCL. Zn(2+) is bound by residues Cys-186, Cys-195, Cys-198, and Cys-201.

The protein belongs to the QueC family. In terms of assembly, homodimer. It depends on Zn(2+) as a cofactor.

It carries out the reaction 7-carboxy-7-deazaguanine + NH4(+) + ATP = 7-cyano-7-deazaguanine + ADP + phosphate + H2O + H(+). It functions in the pathway purine metabolism; 7-cyano-7-deazaguanine biosynthesis. Its function is as follows. Catalyzes the ATP-dependent conversion of 7-carboxy-7-deazaguanine (CDG) to 7-cyano-7-deazaguanine (preQ(0)). The chain is 7-cyano-7-deazaguanine synthase from Bacillus mycoides (strain KBAB4) (Bacillus weihenstephanensis).